The primary structure comprises 984 residues: MORC family CW-type zinc finger protein 1 (984 aa).

A coiled-coil region spans residues 284-353 (AFKDEVKKAE…RELKTARTLS (70 aa)). The CW-type zinc-finger motif lies at 477-531 (AMGIPFIIQCDLCLKWRVLPSSTNYQEKEFFDIWICANNPNRLENSCHQVECLPS). Zn(2+) contacts are provided by Cys486, Cys489, Cys512, and Cys523. 2 coiled-coil regions span residues 737-761 (DVSL…CNDV) and 900-934 (EISL…LQLG).

It localises to the nucleus. Its function is as follows. Required for spermatogenesis. Essential for de novo DNA methylation and silencing of transposable elements in the male embryonic germ cells. This is MORC family CW-type zinc finger protein 1 from Homo sapiens (Human).